The chain runs to 195 residues: Imidazoleglycerol-phosphate dehydratase (195 aa).

It belongs to the imidazoleglycerol-phosphate dehydratase family.

The protein localises to the cytoplasm. The catalysed reaction is D-erythro-1-(imidazol-4-yl)glycerol 3-phosphate = 3-(imidazol-4-yl)-2-oxopropyl phosphate + H2O. It participates in amino-acid biosynthesis; L-histidine biosynthesis; L-histidine from 5-phospho-alpha-D-ribose 1-diphosphate: step 6/9. The polypeptide is Imidazoleglycerol-phosphate dehydratase (Burkholderia ambifaria (strain MC40-6)).